The primary structure comprises 390 residues: Prostaglandin E2 receptor EP3 subtype (390 aa).

Over Met-1–Ala-53 the chain is Extracellular. Asn-18 and Asn-36 each carry an N-linked (GlcNAc...) asparagine glycan. The helical transmembrane segment at Phe-54 to Arg-78 threads the bilayer. Topologically, residues Arg-79–Cys-91 are cytoplasmic. A helical membrane pass occupies residues Ile-92–Val-112. Topologically, residues Val-113–Thr-131 are extracellular. Residues Phe-132–Val-153 form a helical membrane-spanning segment. At Glu-154–Arg-175 the chain is on the cytoplasmic side. A helical membrane pass occupies residues Ala-176 to Gly-197. Residues Gln-198–Asn-227 lie on the Extracellular side of the membrane. A helical transmembrane segment spans residues Leu-228 to Ile-253. Over Lys-254 to Gln-283 the chain is Cytoplasmic. Residues Leu-284–Phe-307 traverse the membrane as a helical segment. At Asn-308 to Phe-327 the chain is on the extracellular side. A helical membrane pass occupies residues Phe-328 to Leu-349. Over Arg-350–Arg-390 the chain is Cytoplasmic.

It belongs to the G-protein coupled receptor 1 family. Interacts (via C-terminus) with MKLN1. Detected in kidney. Expressed in small intestine, heart, pancreas, gastric fundic mucosa, mammary artery and pulmonary vessels.

It localises to the cell membrane. Receptor for prostaglandin E2 (PGE2). The activity of this receptor can couple to both the inhibition of adenylate cyclase mediated by G(i) proteins, and to an elevation of intracellular calcium. Required for normal development of fever in response to pyrinogens, including IL1B, prostaglandin E2 and bacterial lipopolysaccharide (LPS). Required for normal potentiation of platelet aggregation by prostaglandin E2, and thus plays a role in the regulation of blood coagulation. Required for increased HCO3(-) secretion in the duodenum in response to mucosal acidification, and thereby contributes to the protection of the mucosa against acid-induced ulceration. Not required for normal kidney function, normal urine volume and osmolality. This Homo sapiens (Human) protein is Prostaglandin E2 receptor EP3 subtype (PTGER3).